A 1178-amino-acid polypeptide reads, in one-letter code: Ubiquitin carboxyl-terminal hydrolase cyk-3 (1178 aa).

EF-hand domains lie at 28–60 (EEYR…GAQI), 175–210 (FPDS…LCRG), and 211–246 (PLPG…LNVP). Residues D188, N190, D192, Q194, E199, D224, D226, D228, and E235 each coordinate Ca(2+). Positions 296 to 410 (ESRKMELQIV…VDSQFTRKYL (115 aa)) constitute a DUSP domain. One can recognise a USP domain in the interval 570–1175 (VGLVNYGNFC…GAYLLFYERK (606 aa)). The Nucleophile role is filled by C579. Residues 681 to 725 (SNKSLHPSPEESEGTDSNKLSDSSKKKEADKEEADEEKAERSWTE) are disordered. Catalysis depends on H1134, which acts as the Proton acceptor.

The protein belongs to the peptidase C19 family. In terms of tissue distribution, expressed in excretory cells, coelomocytes, head neurons, hypodermal cells, germ cells, oocytes, sperm and pharynx (at protein level).

The protein localises to the nucleus. Its subcellular location is the cytoplasm. It localises to the cytoskeleton. The protein resides in the microtubule organizing center. The catalysed reaction is Thiol-dependent hydrolysis of ester, thioester, amide, peptide and isopeptide bonds formed by the C-terminal Gly of ubiquitin (a 76-residue protein attached to proteins as an intracellular targeting signal).. Ubiquitin-protein hydrolase which cleaves ubiquitin from ubiquitinated proteins. Plays a role in embryo osmoregulation. Probably by regulating osmosis, controls actin redistribution in the 1-cell embryos and thus actin-dependent processes such as cytokinesis and P-granules segregation. During the first embryonic mitotic division, involved in the formation of a functional microtubule organizing center provided by the male pronucleus. Acts as a positive regulator of the mTORC1 signaling. The chain is Ubiquitin carboxyl-terminal hydrolase cyk-3 from Caenorhabditis elegans.